The sequence spans 287 residues: 4-hydroxybenzoate octaprenyltransferase (287 aa).

9 helical membrane-spanning segments follow: residues 20–40 (IGSLLLLWPTLWALFLAADGL), 43–63 (MHVLVVFVLGVVFMRAAGCVI), 94–114 (LGLFGLLVLVSFVLVLTMNTL), 115–135 (TIMLSVVGLVLAAAYPFMKRY), 137–157 (HLPQLVLGMAFGWSIPMAYAA), 159–179 (AGELPVVAWLLFTANILWTIA), 210–230 (IIIGVLQLSTLVTMILIGHSL), 235–255 (IYYWFLLMASGLFVYQQRLIG), and 266–286 (FLNNNYVGMLIFLGIAISVMM).

The protein belongs to the UbiA prenyltransferase family. Requires Mg(2+) as cofactor.

It is found in the cell inner membrane. The catalysed reaction is all-trans-octaprenyl diphosphate + 4-hydroxybenzoate = 4-hydroxy-3-(all-trans-octaprenyl)benzoate + diphosphate. It functions in the pathway cofactor biosynthesis; ubiquinone biosynthesis. Functionally, catalyzes the prenylation of para-hydroxybenzoate (PHB) with an all-trans polyprenyl group. Mediates the second step in the final reaction sequence of ubiquinone-8 (UQ-8) biosynthesis, which is the condensation of the polyisoprenoid side chain with PHB, generating the first membrane-bound Q intermediate 3-octaprenyl-4-hydroxybenzoate. The polypeptide is 4-hydroxybenzoate octaprenyltransferase (Photobacterium profundum (strain SS9)).